The sequence spans 205 residues: CD83 antigen (205 aa).

The signal sequence occupies residues 1-19 (MSRGLQLLLLSCAYSLAPA). Residues 20–114 (TPEVKVACSE…YRCTLQDPDG (95 aa)) form the Ig-like V-type domain. The Extracellular segment spans residues 20–144 (TPEVKVACSE…EETFKKYRAE (125 aa)). Cys35 and Cys107 form a disulfide bridge. The span at 60–69 (METPQEDHLR) shows a compositional bias: basic and acidic residues. A disordered region spans residues 60 to 81 (METPQEDHLRGQHYHQKGQNGS). Residues Asn79, Asn96, and Asn117 are each glycosylated (N-linked (GlcNAc...) asparagine). The chain crosses the membrane as a helical span at residues 145-166 (IVLLLALVIFYLTLIIFTCKFA). Residues 167-205 (RLQSIFPDFSKAGMERAFLPVTSPNKHLGLVTPHKTELV) are Cytoplasmic-facing.

As to quaternary structure, monomer. Homodimer. Homotrimer. Interacts with MARCHF1; this interaction antagonizes MARCHF1-mediated MHC II and CD86 down-regulation. Glycosylated when expressed on activated dendritic cells. Expressed by activated lymphocytes, Langerhans cells and activatd dendritic cells.

The protein localises to the membrane. Functionally, transmembrane glycoprotein predominantly found on the surface of many immune cells including dendritic cells or lymphocytes that plays various roles in immune response regulation. Plays an essential role in CD4(+) T-selection, differentiation and stability by regulating the activity of the major E3 ubiquitin ligase responsible for controlling MHCII trafficking MARCHF8. Also inhibits MARCHF1 association with MHCII or CD86 to prevent their ubiquitination and subsequent degradation. In addition, acts as an important modulator of protective responses against acute infections. In Homo sapiens (Human), this protein is CD83 antigen (CD83).